Here is a 320-residue protein sequence, read N- to C-terminus: Aspartate carbamoyltransferase catalytic subunit (320 aa).

Residues arginine 68 and threonine 69 each contribute to the carbamoyl phosphate site. Lysine 96 contacts L-aspartate. The carbamoyl phosphate site is built by arginine 118, histidine 148, and glutamine 151. L-aspartate is bound by residues arginine 181 and arginine 236. Glycine 277 and proline 278 together coordinate carbamoyl phosphate.

This sequence belongs to the aspartate/ornithine carbamoyltransferase superfamily. ATCase family. Heterododecamer (2C3:3R2) of six catalytic PyrB chains organized as two trimers (C3), and six regulatory PyrI chains organized as three dimers (R2).

It carries out the reaction carbamoyl phosphate + L-aspartate = N-carbamoyl-L-aspartate + phosphate + H(+). It functions in the pathway pyrimidine metabolism; UMP biosynthesis via de novo pathway; (S)-dihydroorotate from bicarbonate: step 2/3. Functionally, catalyzes the condensation of carbamoyl phosphate and aspartate to form carbamoyl aspartate and inorganic phosphate, the committed step in the de novo pyrimidine nucleotide biosynthesis pathway. The sequence is that of Aspartate carbamoyltransferase catalytic subunit from Paracidovorax citrulli (strain AAC00-1) (Acidovorax citrulli).